The primary structure comprises 243 residues: Triosephosphate isomerase (243 aa).

9–11 (NWK) serves as a coordination point for substrate. The active-site Electrophile is histidine 96. The Proton acceptor role is filled by glutamate 165. Residues glycine 171, serine 204, and 225 to 226 (GG) contribute to the substrate site.

This sequence belongs to the triosephosphate isomerase family. As to quaternary structure, homodimer.

The protein resides in the cytoplasm. It catalyses the reaction D-glyceraldehyde 3-phosphate = dihydroxyacetone phosphate. Its pathway is carbohydrate biosynthesis; gluconeogenesis. It participates in carbohydrate degradation; glycolysis; D-glyceraldehyde 3-phosphate from glycerone phosphate: step 1/1. Functionally, involved in the gluconeogenesis. Catalyzes stereospecifically the conversion of dihydroxyacetone phosphate (DHAP) to D-glyceraldehyde-3-phosphate (G3P). This is Triosephosphate isomerase from Synechococcus sp. (strain CC9311).